We begin with the raw amino-acid sequence, 357 residues long: Cinnamyl alcohol dehydrogenase 1 (357 aa).

Cys-47 contacts Zn(2+). Thr-49 serves as a coordination point for NADP(+). Residues His-69, Glu-70, Cys-100, Cys-103, Cys-106, Cys-114, and Cys-163 each coordinate Zn(2+). Residues Thr-167, 188-193 (GLGGVG), 211-216 (SSSDKK), Thr-251, Gly-275, and 298-300 (SFI) contribute to the NADP(+) site.

The protein belongs to the zinc-containing alcohol dehydrogenase family. Homodimer. Zn(2+) is required as a cofactor. In terms of tissue distribution, expressed in leaves, mainly in peltate glands.

It catalyses the reaction (E)-cinnamyl alcohol + NADP(+) = (E)-cinnamaldehyde + NADPH + H(+). The enzyme catalyses (E)-coniferol + NADP(+) = (E)-coniferaldehyde + NADPH + H(+). The catalysed reaction is (E)-sinapyl alcohol + NADP(+) = (E)-sinapaldehyde + NADPH + H(+). It carries out the reaction (E)-4-coumaroyl alcohol + NADP(+) = (E)-4-coumaraldehyde + NADPH + H(+). It catalyses the reaction (E)-caffeyl alcohol + NADP(+) = (E)-caffeyl aldehyde + NADPH + H(+). It functions in the pathway aromatic compound metabolism; phenylpropanoid biosynthesis. With respect to regulation, 60% inhibition by 5 mM Ca(+), Mg(+) or Cu(+). Involved in the production of citral, a mixture of geranial and neral with a strong lemony scent. Reversibly oxidizes geraniol to produce geranial at half the efficiency compared with its activity with cinnamyl alcohol. Does not use nerol and neral as substrates. The polypeptide is Cinnamyl alcohol dehydrogenase 1 (CAD1) (Ocimum basilicum (Sweet basil)).